The chain runs to 290 residues: uncharacterized protein (290 aa).

The region spanning 30–274 (PTILLLHGFP…YDTGHFALET (245 aa)) is the AB hydrolase-1 domain. Histidine 269 is an active-site residue.

It belongs to the DmpD/TodF/XylF esterase family.

This is an uncharacterized protein from Saccharomyces cerevisiae (strain ATCC 204508 / S288c) (Baker's yeast).